A 210-amino-acid polypeptide reads, in one-letter code: Na(+)-translocating NADH-quinone reductase subunit D (210 aa).

The next 5 membrane-spanning stretches (helical) occupy residues 42-62 (FVMTLAVTFVTALSNFSVSLI), 72-92 (IIVQMAIIASLVIVVDQVLKA), 103-123 (VFVGLIITNCIVMGRAEAFAM), 131-151 (LIDGIGNGLGYGFVLITVGFF), and 178-198 (NGLMLLAPSAFFLIGFLIWVI).

This sequence belongs to the NqrDE/RnfAE family. As to quaternary structure, composed of six subunits; NqrA, NqrB, NqrC, NqrD, NqrE and NqrF.

It is found in the cell inner membrane. The catalysed reaction is a ubiquinone + n Na(+)(in) + NADH + H(+) = a ubiquinol + n Na(+)(out) + NAD(+). In terms of biological role, NQR complex catalyzes the reduction of ubiquinone-1 to ubiquinol by two successive reactions, coupled with the transport of Na(+) ions from the cytoplasm to the periplasm. NqrA to NqrE are probably involved in the second step, the conversion of ubisemiquinone to ubiquinol. The sequence is that of Na(+)-translocating NADH-quinone reductase subunit D from Vibrio parahaemolyticus serotype O3:K6 (strain RIMD 2210633).